A 288-amino-acid polypeptide reads, in one-letter code: Acetyl-coenzyme A carboxylase carboxyl transferase subunit beta (288 aa).

The CoA carboxyltransferase N-terminal domain maps to 34 to 288 (LFAKCPGCKQ…TLLSFHGGVQ (255 aa)). The Zn(2+) site is built by C38, C41, C56, and C59. Residues 38–59 (CPGCKQAIYQKDLGQAKICPNC) form a C4-type zinc finger.

This sequence belongs to the AccD/PCCB family. Acetyl-CoA carboxylase is a heterohexamer composed of biotin carboxyl carrier protein (AccB), biotin carboxylase (AccC) and two subunits each of ACCase subunit alpha (AccA) and ACCase subunit beta (AccD). The cofactor is Zn(2+).

It localises to the cytoplasm. It carries out the reaction N(6)-carboxybiotinyl-L-lysyl-[protein] + acetyl-CoA = N(6)-biotinyl-L-lysyl-[protein] + malonyl-CoA. The protein operates within lipid metabolism; malonyl-CoA biosynthesis; malonyl-CoA from acetyl-CoA: step 1/1. Its function is as follows. Component of the acetyl coenzyme A carboxylase (ACC) complex. Biotin carboxylase (BC) catalyzes the carboxylation of biotin on its carrier protein (BCCP) and then the CO(2) group is transferred by the transcarboxylase to acetyl-CoA to form malonyl-CoA. This chain is Acetyl-coenzyme A carboxylase carboxyl transferase subunit beta, found in Streptococcus thermophilus (strain CNRZ 1066).